The primary structure comprises 53 residues: MFLSIPSTAYIIDAVPLEEAWESSRVDFIKFICNLHLSGSNILGFRFHNSRGI.

This is an uncharacterized protein from Thermoproteus tenax (TTV1).